Consider the following 233-residue polypeptide: MASHSSTLFTSPSSFILFSSHRLKSSPNYFTYHFPRSVKRPHFDLRCSVSIEKEVPETERPFTFLRVSDGDQTQSSSYSVRARFEKMIRTAQDKVCEAIEAVEEGPKFKEDVWSRPGGGGGISRILQDGNVWEKAGVNVSVIYGVMPPEAYRAAKAATSEQKPGPIPFFAAGTSSVLHPQNPFAPTLHFNYRYFETDAPKDVPGAPRQWWFGGGTDFTPAYIFEEDVKHFHSV.

The N-terminal 48 residues, 1 to 48 (MASHSSTLFTSPSSFILFSSHRLKSSPNYFTYHFPRSVKRPHFDLRCS), are a transit peptide targeting the chloroplast. S174 serves as a coordination point for substrate. H188 (proton donor) is an active-site residue.

The protein belongs to the aerobic coproporphyrinogen-III oxidase family. In terms of assembly, homodimer.

It localises to the plastid. The protein localises to the chloroplast. The enzyme catalyses coproporphyrinogen III + O2 + 2 H(+) = protoporphyrinogen IX + 2 CO2 + 2 H2O. It functions in the pathway porphyrin-containing compound metabolism; protoporphyrin-IX biosynthesis; protoporphyrinogen-IX from coproporphyrinogen-III (O2 route): step 1/1. It participates in porphyrin-containing compound metabolism; chlorophyll biosynthesis. In terms of biological role, key enzyme in heme biosynthesis. Catalyzes the oxidative decarboxylation of propionic acid side chains of rings A and B of coproporphyrinogen III. In Arabidopsis thaliana (Mouse-ear cress), this protein is Coproporphyrinogen-III oxidase 2, chloroplastic (CPX2).